The primary structure comprises 861 residues: Probable linoleate 9S-lipoxygenase 3 (861 aa).

The PLAT domain maps to 33–160 (FTDLASSLTG…NYKSDRIFFA (128 aa)). Positions 163-861 (PYLPSDTPEL…GKGIPNSVSI (699 aa)) constitute a Lipoxygenase domain. The segment at 220 to 247 (TLGGSAEYPYPRRGRTGRPPTRTDPKSE) is disordered. The Fe cation site is built by H522, H527, H713, N717, and I861.

This sequence belongs to the lipoxygenase family. Monomer. Fe cation is required as a cofactor. In terms of tissue distribution, expressed in tubers and roots. Not detected in leaves, flowers, stems, shoot tips, or axillary buds.

The protein resides in the cytoplasm. It catalyses the reaction (9Z,12Z)-octadecadienoate + O2 = (9S)-hydroperoxy-(10E,12Z)-octadecadienoate. The protein operates within lipid metabolism; oxylipin biosynthesis. Its function is as follows. Plant lipoxygenases may be involved in a number of diverse aspects of plant physiology including growth and development, pest resistance, and senescence or responses to wounding. Catalyzes the hydroperoxidation of lipids containing a cis,cis-1,4-pentadiene structure. In Solanum tuberosum (Potato), this protein is Probable linoleate 9S-lipoxygenase 3 (LOX1.3).